We begin with the raw amino-acid sequence, 599 residues long: Elongation factor 4 (599 aa).

Positions 5-187 constitute a tr-type G domain; that stretch reads SHIRNFSIIA…RLVQTIPAPT (183 aa). Residues 17–22 and 134–137 contribute to the GTP site; these read DHGKST and NKMD.

It belongs to the TRAFAC class translation factor GTPase superfamily. Classic translation factor GTPase family. LepA subfamily.

It is found in the cell inner membrane. It catalyses the reaction GTP + H2O = GDP + phosphate + H(+). Functionally, required for accurate and efficient protein synthesis under certain stress conditions. May act as a fidelity factor of the translation reaction, by catalyzing a one-codon backward translocation of tRNAs on improperly translocated ribosomes. Back-translocation proceeds from a post-translocation (POST) complex to a pre-translocation (PRE) complex, thus giving elongation factor G a second chance to translocate the tRNAs correctly. Binds to ribosomes in a GTP-dependent manner. The protein is Elongation factor 4 of Ectopseudomonas mendocina (strain ymp) (Pseudomonas mendocina).